A 437-amino-acid chain; its full sequence is Protein farnesyltransferase subunit beta (437 aa).

5 PFTB repeats span residues 123 to 164 (ATDV…CIIG), 174 to 215 (REKL…SLTN), 222 to 263 (FEGT…VILK), 270 to 312 (LKSL…PLLH), and 332 to 374 (QQAL…SIAQ). (2E,6E)-farnesyl diphosphate is bound by residues 248–251 (HGGY) and 291–294 (RCNK). Positions 297 and 299 each coordinate Zn(2+). 300–303 (YSFW) provides a ligand contact to (2E,6E)-farnesyl diphosphate. Zn(2+) is bound at residue His-362. A Phosphoserine modification is found at Ser-432. Thr-436 bears the Phosphothreonine mark.

This sequence belongs to the protein prenyltransferase subunit beta family. As to quaternary structure, heterodimer of FNTA and FNTB. Zn(2+) is required as a cofactor.

It catalyses the reaction L-cysteinyl-[protein] + (2E,6E)-farnesyl diphosphate = S-(2E,6E)-farnesyl-L-cysteinyl-[protein] + diphosphate. In terms of biological role, essential subunit of the farnesyltransferase complex. Catalyzes the transfer of a farnesyl moiety from farnesyl diphosphate to a cysteine at the fourth position from the C-terminus of several proteins having the C-terminal sequence Cys-aliphatic-aliphatic-X. This is Protein farnesyltransferase subunit beta (Fntb) from Rattus norvegicus (Rat).